A 1024-amino-acid chain; its full sequence is NLR family CARD domain-containing protein 4 (1024 aa).

In terms of domain architecture, CARD spans 1-88 (MNFIKDNSRA…PLFQDLNGQS (88 aa)). Residues 95–298 (EGDLDDLAQD…QFGALTAEVG (204 aa)) form a nucleotide-binding domain (NBD) region. The NACHT domain maps to 163–476 (SPCIIEGESG…VTKGNGYLQK (314 aa)). Residue 169-176 (GESGKGKS) coordinates ATP. The interval 356–463 (SHTQTTLFHT…RLSSLLTSHE (108 aa)) is winged-helix domain (WHD). At Ser533 the chain carries Phosphoserine. LRR repeat units follow at residues 578–598 (FFQG…LFDF), 656–679 (KQEF…DIRY), 735–758 (VTNL…LTDS), 762–785 (LKNL…KLAE), 787–812 (LKNL…DYIV), 824–847 (EIQL…LHNL), 848–870 (VKLS…ALHE), 878–902 (LEQL…LLKH), 911–933 (KLGL…FFGK), 936–963 (LKNF…VFEN), 965–985 (KQLV…ALVR), and 999–1021 (EARL…AFKL).

Homooligomer; homooligomerizes to induce formation of the NLRC4 inflammasome. Homooligomerizes following activation by pathogenic proteins. Component of the NLRC4 inflammasome, at least composed of NLRC4 and caspase-1 (CASP1). Some NLRC4 inflammasomes contain PYCARD/ASC, while some others directly contact and activate CASP1. Interacts (via CARD domain) with PYCARD/ASC, pro-caspase-1 (CASP1), NOD2, BCL10 and NALP1 (NAC) by CARD-CARD interaction. Interacts with EIF2AK2/PKR. In terms of processing, phosphorylated at Ser-533 following infection of macrophages with S.typhimurium (Salmonella). Phosphorylation is essential for NLRC4 inflammasome function to promote caspase-1 activation and pyroptosis. PRKCD phosphorylates Ser-533 in vitro. As to expression, isoform 2 is expressed ubiquitously, although highly expressed in lung and spleen. Isoform 1 is highly expressed in lung, followed by leukocytes especially monocytes, lymph node, colon, brain, prostate, placenta, spleen, bone marrow and fetal liver. Isoform 4 is only detected in brain.

Its subcellular location is the cytoplasm. The protein resides in the cytosol. It is found in the inflammasome. Its function is as follows. Key component of inflammasomes that indirectly senses specific proteins from pathogenic bacteria and fungi and responds by assembling an inflammasome complex that promotes caspase-1 activation, cytokine production and macrophage pyroptosis. The NLRC4 inflammasome is activated as part of the innate immune response to a range of intracellular bacteria. The sequence is that of NLR family CARD domain-containing protein 4 (NLRC4) from Homo sapiens (Human).